The following is a 278-amino-acid chain: Undecaprenyl-diphosphatase (278 aa).

8 helical membrane passes run Tyr-3 to Ser-23, Val-42 to Phe-62, Phe-88 to Ile-108, Ile-112 to Tyr-132, Ile-152 to Met-172, Leu-190 to Ser-210, Gly-225 to Leu-245, and Val-253 to Ile-273.

This sequence belongs to the UppP family.

It localises to the cell membrane. It catalyses the reaction di-trans,octa-cis-undecaprenyl diphosphate + H2O = di-trans,octa-cis-undecaprenyl phosphate + phosphate + H(+). Catalyzes the dephosphorylation of undecaprenyl diphosphate (UPP). The chain is Undecaprenyl-diphosphatase from Saccharolobus solfataricus (strain ATCC 35092 / DSM 1617 / JCM 11322 / P2) (Sulfolobus solfataricus).